Reading from the N-terminus, the 60-residue chain is UPF0434 protein NMC0623 (60 aa).

The protein belongs to the UPF0434 family.

The protein is UPF0434 protein NMC0623 of Neisseria meningitidis serogroup C / serotype 2a (strain ATCC 700532 / DSM 15464 / FAM18).